The chain runs to 308 residues: Cell division protein FtsX (308 aa).

Topologically, residues 1–24 (MISRFFRHLFEALKSLKRNGWMTV) are cytoplasmic. Residues 25–45 (AAVSSVMITLTLVAIFASVIF) form a helical membrane-spanning segment. Over 46–178 (NTAKLATDIE…NTERLFKLAS (133 aa)) the chain is Extracellular. The helical transmembrane segment at 179–199 (FIRVWGLGIAALLIFIAVFLI) threads the bilayer. Residues 200–236 (SNTIRITIISRSREIQIMRLVGAKNSYIRGPFLLEGA) are Cytoplasmic-facing. Residues 237 to 257 (FIGLLGAIAPSVLVFIVYQIV) form a helical membrane-spanning segment. Over 258–276 (YQSVNKSLVGQNLSMISPD) the chain is Extracellular. Residues 277-297 (LFSPLMIALLFVIGVFIGSLG) traverse the membrane as a helical segment. Residues 298 to 308 (SGISMRRFLKI) are Cytoplasmic-facing.

This sequence belongs to the ABC-4 integral membrane protein family. FtsX subfamily. In terms of assembly, homodimer. Interacts with FtsE; forms a membrane-associated complex. Interacts (via large extracellular loop) with PcsB (via N-terminal coiled-coil domain). This interaction directs PcsB to equatorial and septal sites of dividing cells.

Its subcellular location is the cell membrane. In terms of biological role, part of the ABC transporter FtsEX involved in asymmetric cellular division facilitating the initiation of sporulation. Required in maintaining normal growth and cellular morphology. In Streptococcus pneumoniae serotype 2 (strain D39 / NCTC 7466), this protein is Cell division protein FtsX.